The primary structure comprises 334 residues: Holliday junction branch migration complex subunit RuvB (334 aa).

A large ATPase domain (RuvB-L) region spans residues 4–186; it reads ADRLIAPENP…FGITQRLEYY (183 aa). Residues isoleucine 25, arginine 26, glycine 67, lysine 70, threonine 71, threonine 72, 133–135, arginine 176, tyrosine 186, and arginine 223 each bind ATP; that span reads EDY. Threonine 71 lines the Mg(2+) pocket. Residues 187-257 form a small ATPAse domain (RuvB-S) region; the sequence is KVQDLQNIVQ…VADKALNMLD (71 aa). Positions 260–334 are head domain (RuvB-H); that stretch reads AQGFDYMDRK…RAYLHFGIEK (75 aa). Residues arginine 315 and arginine 320 each coordinate DNA.

Belongs to the RuvB family. Homohexamer. Forms an RuvA(8)-RuvB(12)-Holliday junction (HJ) complex. HJ DNA is sandwiched between 2 RuvA tetramers; dsDNA enters through RuvA and exits via RuvB. An RuvB hexamer assembles on each DNA strand where it exits the tetramer. Each RuvB hexamer is contacted by two RuvA subunits (via domain III) on 2 adjacent RuvB subunits; this complex drives branch migration. In the full resolvosome a probable DNA-RuvA(4)-RuvB(12)-RuvC(2) complex forms which resolves the HJ.

Its subcellular location is the cytoplasm. The enzyme catalyses ATP + H2O = ADP + phosphate + H(+). Functionally, the RuvA-RuvB-RuvC complex processes Holliday junction (HJ) DNA during genetic recombination and DNA repair, while the RuvA-RuvB complex plays an important role in the rescue of blocked DNA replication forks via replication fork reversal (RFR). RuvA specifically binds to HJ cruciform DNA, conferring on it an open structure. The RuvB hexamer acts as an ATP-dependent pump, pulling dsDNA into and through the RuvAB complex. RuvB forms 2 homohexamers on either side of HJ DNA bound by 1 or 2 RuvA tetramers; 4 subunits per hexamer contact DNA at a time. Coordinated motions by a converter formed by DNA-disengaged RuvB subunits stimulates ATP hydrolysis and nucleotide exchange. Immobilization of the converter enables RuvB to convert the ATP-contained energy into a lever motion, pulling 2 nucleotides of DNA out of the RuvA tetramer per ATP hydrolyzed, thus driving DNA branch migration. The RuvB motors rotate together with the DNA substrate, which together with the progressing nucleotide cycle form the mechanistic basis for DNA recombination by continuous HJ branch migration. Branch migration allows RuvC to scan DNA until it finds its consensus sequence, where it cleaves and resolves cruciform DNA. This Vibrio parahaemolyticus serotype O3:K6 (strain RIMD 2210633) protein is Holliday junction branch migration complex subunit RuvB.